A 279-amino-acid chain; its full sequence is Oxygen-dependent coproporphyrinogen-III oxidase (279 aa).

S102 is a binding site for substrate. A divalent metal cation-binding residues include H106 and H116. H116 functions as the Proton donor in the catalytic mechanism. 118-120 serves as a coordination point for substrate; the sequence is NTR. The a divalent metal cation site is built by H149 and H179. Residues 244–279 are important for dimerization; sequence YVEFNLLYDRGTKFGLMTDGNVEAILMSLPPEVKFN.

Belongs to the aerobic coproporphyrinogen-III oxidase family. Homodimer. It depends on a divalent metal cation as a cofactor.

It localises to the cytoplasm. The enzyme catalyses coproporphyrinogen III + O2 + 2 H(+) = protoporphyrinogen IX + 2 CO2 + 2 H2O. Its pathway is porphyrin-containing compound metabolism; protoporphyrin-IX biosynthesis; protoporphyrinogen-IX from coproporphyrinogen-III (O2 route): step 1/1. Functionally, involved in the heme biosynthesis. Catalyzes the aerobic oxidative decarboxylation of propionate groups of rings A and B of coproporphyrinogen-III to yield the vinyl groups in protoporphyrinogen-IX. The protein is Oxygen-dependent coproporphyrinogen-III oxidase of Rickettsia akari (strain Hartford).